The sequence spans 321 residues: Mitochondrial thiamine pyrophosphate carrier 1 (321 aa).

3 Solcar repeats span residues 12–110 (GSRQ…ISQM), 121–207 (PSSA…LKPV), and 216–311 (PLGS…AMGI). Transmembrane regions (helical) follow at residues 17–38 (VVVA…LDVI), 91–107 (LLYL…YTNI), 127–147 (FISG…LDLL), 182–199 (GLGA…LFFA), 213–231 (LPLP…ASVV), and 286–303 (GLTV…VTMW).

This sequence belongs to the mitochondrial carrier (TC 2.A.29) family.

It is found in the mitochondrion inner membrane. Functionally, mitochondrial transporter that mediates uptake of thiamine pyrophosphate (ThPP) into mitochondria. This Phaeosphaeria nodorum (strain SN15 / ATCC MYA-4574 / FGSC 10173) (Glume blotch fungus) protein is Mitochondrial thiamine pyrophosphate carrier 1 (TPC1).